The primary structure comprises 116 residues: MANEVRVARLESLIKDVINNALANEINDKIAKLARVTAVRLSNDLSVAKIFLDAHKRESMLKVLENVNKVSGLLRSKLAAEWTSYKVPELRFVIDETIDYANHIDELFKKIKQQEN.

It belongs to the RbfA family. In terms of assembly, monomer. Binds 30S ribosomal subunits, but not 50S ribosomal subunits or 70S ribosomes.

It localises to the cytoplasm. In terms of biological role, one of several proteins that assist in the late maturation steps of the functional core of the 30S ribosomal subunit. Associates with free 30S ribosomal subunits (but not with 30S subunits that are part of 70S ribosomes or polysomes). Required for efficient processing of 16S rRNA. May interact with the 5'-terminal helix region of 16S rRNA. This is Ribosome-binding factor A from Ureaplasma parvum serovar 3 (strain ATCC 27815 / 27 / NCTC 11736).